The chain runs to 161 residues: Urease accessory protein UreE (161 aa).

The protein belongs to the UreE family. In terms of assembly, homodimer.

The protein resides in the cytoplasm. Involved in urease metallocenter assembly. Binds nickel. Probably functions as a nickel donor during metallocenter assembly. It is not essential for urease activity. In Proteus mirabilis (strain HI4320), this protein is Urease accessory protein UreE.